The sequence spans 621 residues: MTQEKKKFDAEVGKILNLMIHSLYSNKEIFMRELISNASDACDKLRYLSQSNSELIAGDSNFKIIVKVDKDNGQIIIRDNGIGMNKEDLIENLGTIARSGTANFLKNLSGDSKKDNMLIGQFGVGFYSSFMVADKVTVTSRKAGESKVHTWESDGLGEYIVADSEQEFTRGTEIVLYIKKSETTFLDHFRLKHIVKSYSDHIAVPIYFCDEAGNNEIQLNSASALWTRPKSEITEDQYKEFYKSLSYAVDDPWVTLHNKNEGAIEFTNLLFIPSSKTFDLFHPDRKKRVKLYIKRVFISDENIDLIPSYLRFLRGVVDSEDLPLNISRESLQHNNVLEKIKNAITKRVLGELRKKKEELPEEYNKFWTNFGGALKEGLCEATTDHEKLLEVCIFRSALHNKMISIDEYIANFKEGQNTIYYLSGDNPDKLLSSPQIEGLLNKNIDVLLFTDTVDDFWVNVNSEYKGYAIKSATRSDIDVEQTTSQPKDKNTDSKKSDNEYKLLTDYFKEILGELVKEVKISKKLTLSPACLAVSDTAMDIRMERFLIEQKQIANASAKNLELNPKNKIIEKIFNDLKANNKNNNELVNLIFDQACILEGEPVADTGAFSKRLNDILQKAIL.

An a; substrate-binding region spans residues 1-328; sequence MTQEKKKFDA…SEDLPLNISR (328 aa). Residues 329–544 are b; that stretch reads ESLQHNNVLE…DTAMDIRMER (216 aa). The segment at 545 to 621 is c; it reads FLIEQKQIAN…LNDILQKAIL (77 aa).

It belongs to the heat shock protein 90 family. Homodimer.

The protein resides in the cytoplasm. In terms of biological role, molecular chaperone. Has ATPase activity. The polypeptide is Chaperone protein HtpG (Rickettsia prowazekii (strain Madrid E)).